A 376-amino-acid chain; its full sequence is Alpha-2,8-sialyltransferase 8E (376 aa).

Topologically, residues 1 to 17 (MRYADPSANRDLLGSRT) are cytoplasmic. The helical; Signal-anchor for type II membrane protein transmembrane segment at 18–38 (LLFIFICAFALVTLLQQILYG) threads the bilayer. Over 39-376 (RNYIKRYFEF…RVHTGTCSCC (338 aa)) the chain is Lumenal. N-linked (GlcNAc...) asparagine glycans are attached at residues Asn-56 and Asn-96. Disulfide bonds link Cys-164–Cys-313 and Cys-178–Cys-373. Residues Asn-192 and 214-216 (NPS) contribute to the substrate site. N-linked (GlcNAc...) asparagine glycans are attached at residues Asn-241 and Asn-284. Position 300–302 (300–302 (STG)) interacts with substrate. Catalysis depends on His-348, which acts as the Proton donor/acceptor.

It belongs to the glycosyltransferase 29 family. In terms of tissue distribution, expressed in fetal and adult brain, adult heart and skeletal muscle. Expressed in fetal and adult brain, not detected in adult heart and skeletal muscle.

The protein resides in the golgi apparatus membrane. It catalyses the reaction a ganglioside GT1b (d18:1(4E)) + CMP-N-acetyl-beta-neuraminate = a ganglioside GQ1b (d18:1(4E)) + CMP + H(+). It carries out the reaction a ganglioside GD3 (d18:1(4E)) + CMP-N-acetyl-beta-neuraminate = a ganglioside GT3 (d18:1(4E)) + CMP + H(+). The catalysed reaction is a ganglioside GD1a (d18:1(4E)) + CMP-N-acetyl-beta-neuraminate = a ganglioside GT1a (d18:1(4E)) + CMP + H(+). The enzyme catalyses a ganglioside GM1b (d18:1(4E)) + CMP-N-acetyl-beta-neuraminate = a ganglioside GD1c (d18:1(4E)) + CMP + H(+). It catalyses the reaction a ganglioside GQ1c (d18:1(4E)) + CMP-N-acetyl-beta-neuraminate = a ganglioside GP1c (d18:1(4E)) + CMP + H(+). It functions in the pathway protein modification; protein glycosylation. Its function is as follows. Involved in the synthesis of gangliosides GD1c, GT1a, GQ1b, GP1c and GT3 from GD1a, GT1b, GM1b and GD3 respectively. The protein is Alpha-2,8-sialyltransferase 8E of Homo sapiens (Human).